Consider the following 328-residue polypeptide: Gonadotropin-releasing hormone receptor (328 aa).

Residues 1 to 38 are Extracellular-facing; the sequence is MANSASPEQNQNHCSAINNSIPLMQGNLPTLTLSGKIR. The N-linked (GlcNAc...) asparagine glycan is linked to Asn-18. The helical transmembrane segment at 39–58 threads the bilayer; it reads VTVTFFLFLLSATFNASFLL. At 59 to 77 the chain is on the cytoplasmic side; it reads KLQKWTQKKEKGKKLSRMK. A helical transmembrane segment spans residues 78–97; it reads LLLKHLTLANLLETLIVMPL. Residues 98 to 115 lie on the Extracellular side of the membrane; that stretch reads DGMWNITVQWYAGELLCK. An N-linked (GlcNAc...) asparagine glycan is attached at Asn-102. Cys-114 and Cys-196 are disulfide-bonded. A helical transmembrane segment spans residues 116-137; that stretch reads VLSYLKLFSMYAPAFMMVVISL. Topologically, residues 138-164 are cytoplasmic; it reads DRSLAITRPLALKSNSKVGQSMVGLAW. A helical membrane pass occupies residues 165 to 184; it reads ILSSVFAGPQLYIFRMIHLA. Residues 185-212 lie on the Extracellular side of the membrane; sequence DSSGQTKVFSQCVTHCSFSQWWHQAFYN. Residues 213-232 traverse the membrane as a helical segment; the sequence is FFTFSCLFIIPLFIMLICNA. The Cytoplasmic segment spans residues 233–281; it reads KIIFTLTRVLHQDPHELQLNQSKNNIPRARLKTLKMTVAFATSFTVCWT. A helical transmembrane segment spans residues 282–300; sequence PYYVLGIWYWFDPEMLNRL. Over 301–306 the chain is Extracellular; sequence SDPVNH. The helical transmembrane segment at 307 to 326 threads the bilayer; it reads FFFLFAFLNPCFDPLIYGYF. The Cytoplasmic portion of the chain corresponds to 327-328; sequence SL.

This sequence belongs to the G-protein coupled receptor 1 family. Pituitary, ovary, testis, breast and prostate but not in liver and spleen.

It localises to the cell membrane. In terms of biological role, receptor for gonadotropin releasing hormone (GnRH) that mediates the action of GnRH to stimulate the secretion of the gonadotropic hormones luteinizing hormone (LH) and follicle-stimulating hormone (FSH). This receptor mediates its action by association with G-proteins that activate a phosphatidylinositol-calcium second messenger system. Isoform 2 may act as an inhibitor of GnRH-R signaling. This chain is Gonadotropin-releasing hormone receptor (GNRHR), found in Homo sapiens (Human).